The sequence spans 691 residues: Elongation factor G (691 aa).

Residues 8–283 (EDYRNFGIMA…AVVDYLPSPA (276 aa)) form the tr-type G domain. Residues 17–24 (AHIDAGKT), 81–85 (DTPGH), and 135–138 (NKMD) each bind GTP.

Belongs to the TRAFAC class translation factor GTPase superfamily. Classic translation factor GTPase family. EF-G/EF-2 subfamily.

It localises to the cytoplasm. Catalyzes the GTP-dependent ribosomal translocation step during translation elongation. During this step, the ribosome changes from the pre-translocational (PRE) to the post-translocational (POST) state as the newly formed A-site-bound peptidyl-tRNA and P-site-bound deacylated tRNA move to the P and E sites, respectively. Catalyzes the coordinated movement of the two tRNA molecules, the mRNA and conformational changes in the ribosome. The polypeptide is Elongation factor G (Methylobacterium radiotolerans (strain ATCC 27329 / DSM 1819 / JCM 2831 / NBRC 15690 / NCIMB 10815 / 0-1)).